We begin with the raw amino-acid sequence, 234 residues long: Sugar fermentation stimulation protein homolog (234 aa).

It belongs to the SfsA family.

This is Sugar fermentation stimulation protein homolog from Citrobacter koseri (strain ATCC BAA-895 / CDC 4225-83 / SGSC4696).